Consider the following 414-residue polypeptide: Serine/threonine transporter SstT (414 aa).

Topologically, residues 2–15 (TTQHSPGLFRRLAH) are cytoplasmic. Residues 16-36 (GSLVKQILAGLILGILLAWIS) traverse the membrane as a helical segment. Over 37-45 (KPAAEAVGL) the chain is Periplasmic. The chain crosses the membrane as a helical span at residues 46–66 (LGTLFVGALKAVAPILVLMLV). Over 67–83 (MASIANHQHGQKTNIRP) the chain is Cytoplasmic. The chain crosses the membrane as a helical span at residues 84–104 (ILFLYLLGTFSAALAAVIFSF). Residues 105–142 (AFPSTLHLSSSAGDISPPSGIVEVMRGLVMSMVSNPID) are Periplasmic-facing. The chain crosses the membrane as a helical span at residues 143-163 (ALLKGNYIGILVWAIGLGFAL). Residues 164–179 (RHGNETTKNLVNDMSN) lie on the Cytoplasmic side of the membrane. A helical membrane pass occupies residues 180–200 (AVTFMVKLVIHFAPIGIFGLV). Topologically, residues 201–217 (SSTLATTGFSTLWGYAQ) are periplasmic. A helical membrane pass occupies residues 218–238 (LLVVLVGCMLLVALVVNPLLV). The Cytoplasmic portion of the chain corresponds to 239-299 (WWKIRRNPFP…VSIPLGATIN (61 aa)). The helical transmembrane segment at 300–320 (MAGAAITITVLTLAAVNTLGI) threads the bilayer. The Periplasmic portion of the chain corresponds to 321–331 (PVDLPTALLLS). A helical transmembrane segment spans residues 332-352 (VVASLCACGASGVAGGSLLLI). The Cytoplasmic portion of the chain corresponds to 353-414 (PLACNMFGIS…DRLANSALRN (62 aa)).

It belongs to the dicarboxylate/amino acid:cation symporter (DAACS) (TC 2.A.23) family.

The protein resides in the cell inner membrane. The catalysed reaction is L-serine(in) + Na(+)(in) = L-serine(out) + Na(+)(out). The enzyme catalyses L-threonine(in) + Na(+)(in) = L-threonine(out) + Na(+)(out). Its function is as follows. Involved in the import of serine and threonine into the cell, with the concomitant import of sodium (symport system). The chain is Serine/threonine transporter SstT from Escherichia coli (strain UTI89 / UPEC).